The chain runs to 145 residues: 3-hydroxyacyl-[acyl-carrier-protein] dehydratase FabZ (145 aa).

The active site involves H51.

Belongs to the thioester dehydratase family. FabZ subfamily.

It is found in the cytoplasm. The enzyme catalyses a (3R)-hydroxyacyl-[ACP] = a (2E)-enoyl-[ACP] + H2O. In terms of biological role, involved in unsaturated fatty acids biosynthesis. Catalyzes the dehydration of short chain beta-hydroxyacyl-ACPs and long chain saturated and unsaturated beta-hydroxyacyl-ACPs. This Staphylococcus carnosus (strain TM300) protein is 3-hydroxyacyl-[acyl-carrier-protein] dehydratase FabZ.